The chain runs to 124 residues: Large ribosomal subunit protein bL12 (124 aa).

It belongs to the bacterial ribosomal protein bL12 family. Homodimer. Part of the ribosomal stalk of the 50S ribosomal subunit. Forms a multimeric L10(L12)X complex, where L10 forms an elongated spine to which 2 to 4 L12 dimers bind in a sequential fashion. Binds GTP-bound translation factors.

Forms part of the ribosomal stalk which helps the ribosome interact with GTP-bound translation factors. Is thus essential for accurate translation. This Liberibacter africanus subsp. capensis protein is Large ribosomal subunit protein bL12.